The primary structure comprises 142 residues: uncharacterized protein (142 aa).

An N-acetyltransferase domain is found at 1–120 (MADKFDANDE…TILKWEKNMD (120 aa)).

Belongs to the acetyltransferase family.

This is an uncharacterized protein from Streptococcus pyogenes serotype M1.